Here is a 729-residue protein sequence, read N- to C-terminus: Fatty acid oxidation complex subunit alpha (729 aa).

The interval 1-189 (MLYQGESLYL…KVGLVQAVVA (189 aa)) is enoyl-CoA hydratase/isomerase. Residue Asp-296 coordinates substrate. Residues 311-729 (PVPQQAAVLG…HADVSHGQPA (419 aa)) form a 3-hydroxyacyl-CoA dehydrogenase region. NAD(+) is bound by residues Met-324, Asp-343, 400-402 (VVE), Lys-407, and Ser-429. Residue His-450 is the For 3-hydroxyacyl-CoA dehydrogenase activity of the active site. NAD(+) is bound at residue Asn-453. Positions 500 and 660 each coordinate substrate.

It in the N-terminal section; belongs to the enoyl-CoA hydratase/isomerase family. This sequence in the C-terminal section; belongs to the 3-hydroxyacyl-CoA dehydrogenase family. As to quaternary structure, heterotetramer of two alpha chains (FadB) and two beta chains (FadA).

It catalyses the reaction a (3S)-3-hydroxyacyl-CoA + NAD(+) = a 3-oxoacyl-CoA + NADH + H(+). The enzyme catalyses a (3S)-3-hydroxyacyl-CoA = a (2E)-enoyl-CoA + H2O. It carries out the reaction a 4-saturated-(3S)-3-hydroxyacyl-CoA = a (3E)-enoyl-CoA + H2O. The catalysed reaction is (3S)-3-hydroxybutanoyl-CoA = (3R)-3-hydroxybutanoyl-CoA. It catalyses the reaction a (3Z)-enoyl-CoA = a 4-saturated (2E)-enoyl-CoA. The enzyme catalyses a (3E)-enoyl-CoA = a 4-saturated (2E)-enoyl-CoA. The protein operates within lipid metabolism; fatty acid beta-oxidation. In terms of biological role, involved in the aerobic and anaerobic degradation of long-chain fatty acids via beta-oxidation cycle. Catalyzes the formation of 3-oxoacyl-CoA from enoyl-CoA via L-3-hydroxyacyl-CoA. It can also use D-3-hydroxyacyl-CoA and cis-3-enoyl-CoA as substrate. In Pectobacterium atrosepticum (strain SCRI 1043 / ATCC BAA-672) (Erwinia carotovora subsp. atroseptica), this protein is Fatty acid oxidation complex subunit alpha.